Consider the following 285-residue polypeptide: MSGMSICFAMREAVEWILHLDPVFMHVGPLEIRWYALSYVFGILFAHWHITKASQCLALDKKFLDSLMLWAVIGIILGGRTAYILLYNPSFYWEYPSEILQTWHGGMSMHGGYVGCIIAVSIVCKKHRVRVMPVLDLCACAAPLGLFLGRMANLVNGELYGRATTTCLGVVFPSSGDLVPRHPSQVYEAMLEGLLPLLFMSILARYTKVRLRFGVLSHMFGAWYGIVRCAVEFFREPDPQVGYIAFGWLTMGQVLSAPIAVVGIFMLVLTVLREKPREGVADISA.

The next 4 helical transmembrane spans lie at 30-50 (LEIR…HWHI), 67-87 (LMLW…ILLY), 103-123 (WHGG…VSIV), and 129-149 (VRVM…LFLG). Residue R150 participates in a 1,2-diacyl-sn-glycero-3-phospho-(1'-sn-glycerol) binding. 3 helical membrane-spanning segments follow: residues 184–204 (SQVY…SILA), 213–233 (FGVL…AVEF), and 252–272 (GQVL…LTVL).

The protein belongs to the Lgt family.

It is found in the cell inner membrane. The catalysed reaction is L-cysteinyl-[prolipoprotein] + a 1,2-diacyl-sn-glycero-3-phospho-(1'-sn-glycerol) = an S-1,2-diacyl-sn-glyceryl-L-cysteinyl-[prolipoprotein] + sn-glycerol 1-phosphate + H(+). It functions in the pathway protein modification; lipoprotein biosynthesis (diacylglyceryl transfer). In terms of biological role, catalyzes the transfer of the diacylglyceryl group from phosphatidylglycerol to the sulfhydryl group of the N-terminal cysteine of a prolipoprotein, the first step in the formation of mature lipoproteins. This chain is Phosphatidylglycerol--prolipoprotein diacylglyceryl transferase, found in Anaplasma marginale (strain Florida).